The sequence spans 295 residues: HTH-type transcriptional regulator TdfR (295 aa).

The 58-residue stretch at 1–58 (MEFRQLRYFVAAAEEGNVGAAARRLHISQPPVTRQIHALEQHLGVLLFERSARGVQLT) folds into the HTH lysR-type domain. Residues 18 to 37 (VGAAARRLHISQPPVTRQIH) constitute a DNA-binding region (H-T-H motif).

Belongs to the LysR transcriptional regulatory family.

It localises to the cytoplasm. In terms of biological role, involved in the regulation of 3-chlorocatechol degradation. Transcriptional regulator of tfdB expression. Acts as a repressor in the absence of its effector (either 2-cis-chlorodiene lactone or chloromaleylacetate) but acts as an activator when its effector is present. The sequence is that of HTH-type transcriptional regulator TdfR (tfdR) from Cupriavidus pinatubonensis (strain JMP 134 / LMG 1197) (Cupriavidus necator (strain JMP 134)).